Reading from the N-terminus, the 857-residue chain is Cation/H(+) antiporter 25 (857 aa).

The next 11 helical transmembrane spans lie at 65 to 85 (FSTF…VYVL), 93 to 110 (RIVC…SMLG), 122 to 142 (PIAN…FFFL), 161 to 181 (YIAA…GAAL), 194 to 214 (SIGG…YTVL), 227 to 247 (FAMS…VLFE), 259 to 279 (YSVI…LLVV), 313 to 333 (FLTD…GLVV), 385 to 405 (IYMS…AALF), 413 to 435 (SLTL…LHWI), and 447 to 467 (VMVL…SFLY). Residue serine 855 is modified to Phosphoserine.

Belongs to the monovalent cation:proton antiporter 2 (CPA2) transporter (TC 2.A.37) family. CHX (TC 2.A.37.4) subfamily. In terms of tissue distribution, specifically expressed in pollen.

The protein localises to the membrane. Its function is as follows. May operate as a cation/H(+) antiporter. This Arabidopsis thaliana (Mouse-ear cress) protein is Cation/H(+) antiporter 25 (CHX25).